The sequence spans 525 residues: Vesicular inhibitory amino acid transporter (525 aa).

Residues 1–132 lie on the Cytoplasmic side of the membrane; the sequence is MATLLRSKLT…WNVTNAIQGM (132 aa). Residues 133-153 form a helical membrane-spanning segment; sequence FVLGLPYAILHGGYLGLFLII. Residues 154-204 are Lumenal, vesicle-facing; it reads FAAVVCCYTGKILIACLYEENEDGEVVRVRDSYVAIANACCAPRFPTLGGR. Tyr186 carries the 3'-nitrotyrosine modification. A helical transmembrane segment spans residues 205–225; sequence VVNVAQIIELVMTCILYVVVS. Residues 226–265 are Cytoplasmic-facing; the sequence is GNLMYNSFPGLPVSQKSWSIIATAVLLPCAFLKNLKAVSK. Residues 266–286 form a helical membrane-spanning segment; the sequence is FSLLCTLAHFVINILVIAYCL. Over 287-305 the chain is Lumenal, vesicle; it reads SRARDWAWEKVKFYIDVKK. The helical transmembrane segment at 306–326 threads the bilayer; it reads FPISIGIIVFSYTSQIFLPSL. At 327-341 the chain is on the cytoplasmic side; that stretch reads EGNMQQPSEFHCMMN. Residues 342–362 form a helical membrane-spanning segment; it reads WTHIAACVLKGLFALVAYLTW. Topologically, residues 363–383 are lumenal, vesicle; it reads ADETKEVITDNLPGSIRAVVN. Residues 384-404 form a helical membrane-spanning segment; the sequence is LFLVAKALLSYPLPFFAAVEV. Residues 405-438 lie on the Cytoplasmic side of the membrane; the sequence is LEKSLFQEGSRAFFPACYGGDGRLKSWGLTLRCA. A helical transmembrane segment spans residues 439-459; that stretch reads LVVFTLLMAIYVPHFALLMGL. Topologically, residues 460–461 are lumenal, vesicle; sequence TG. A helical membrane pass occupies residues 462–482; it reads SLTGAGLCFLLPSLFHLRLLW. Residues 483-489 lie on the Cytoplasmic side of the membrane; sequence RKLLWHQ. The helical transmembrane segment at 490 to 510 threads the bilayer; sequence VFFDVAIFVIGGICSVSGFVH. Topologically, residues 511-525 are lumenal, vesicle; it reads SLEGLIEAYRTNAED.

The protein belongs to the amino acid/polyamine transporter 2 family. In terms of tissue distribution, brain and retina. Localized in horizontal cell tips at both rod and cone terminals.

It is found in the cytoplasmic vesicle membrane. Its subcellular location is the presynapse. The enzyme catalyses 4-aminobutanoate(out) + n H(+)(in) = 4-aminobutanoate(in) + n H(+)(out). It catalyses the reaction glycine(out) + n H(+)(in) = glycine(in) + n H(+)(out). It carries out the reaction beta-alanine(out) + n H(+)(in) = beta-alanine(in) + n H(+)(out). With respect to regulation, chloride ions activate 4-aminobutanoate/H(+) transport. In terms of biological role, antiporter that exchanges vesicular protons for cytosolic 4-aminobutanoate or to a lesser extend glycine, thus allowing their secretion from nerve terminals. The transport is equally dependent on the chemical and electrical components of the proton gradient. May also transport beta-alanine. Acidification of GABAergic synaptic vesicles is a prerequisite for 4-aminobutanoate uptake. The polypeptide is Vesicular inhibitory amino acid transporter (Mus musculus (Mouse)).